Reading from the N-terminus, the 427-residue chain is Trigger factor (427 aa).

The region spanning 165–250 is the PPIase FKBP-type domain; that stretch reads GDTVVIDFEG…LHEIQEQVPA (86 aa).

The protein belongs to the FKBP-type PPIase family. Tig subfamily.

Its subcellular location is the cytoplasm. It carries out the reaction [protein]-peptidylproline (omega=180) = [protein]-peptidylproline (omega=0). Functionally, involved in protein export. Acts as a chaperone by maintaining the newly synthesized protein in an open conformation. Functions as a peptidyl-prolyl cis-trans isomerase. This is Trigger factor from Sulfurovum sp. (strain NBC37-1).